A 330-amino-acid chain; its full sequence is Calponin-3 (330 aa).

Lys23 is subject to N6-acetyllysine. In terms of domain architecture, Calponin-homology (CH) spans 26-130 (QQAEEDLRNW…TLVALAGLAK (105 aa)). The residue at position 158 (Lys158) is an N6-methyllysine. Calponin-like repeat units lie at residues 164–189 (IGLQ…RHLY), 204–229 (ISLQ…RDIY), and 243–268 (ISLQ…RQVY). The interval 279–330 (PVIHNGSQGTGTNGSEISDSDYQAEYPDEYHGEYPDEYPREYQYGDDQGIDY) is disordered. The segment covering 306 to 318 (DEYHGEYPDEYPR) has biased composition (basic and acidic residues).

It belongs to the calponin family.

Functionally, thin filament-associated protein that is implicated in the regulation and modulation of smooth muscle contraction. It is capable of binding to actin, calmodulin and tropomyosin. The interaction of calponin with actin inhibits the actomyosin Mg-ATPase activity. The chain is Calponin-3 (Cnn3) from Rattus norvegicus (Rat).